A 595-amino-acid polypeptide reads, in one-letter code: Protein alan shepard (595 aa).

Positions 1-12 are enriched in pro residues; sequence MHPRYSPAPPPH. A disordered region spans residues 1–82; sequence MHPRYSPAPP…ASVAAAPPTP (82 aa). Phosphotyrosine is present on Tyr5. A compositionally biased stretch (low complexity) spans 13-31; sequence QQQQQQQQQPMGGPHQQQS. Residues 32–43 are compositionally biased toward gly residues; sequence AGGGPGHGGGAS. Over residues 50-68 the composition is skewed to polar residues; sequence PNSQQLPPQMPRSQNYANG. A compositionally biased stretch (low complexity) spans 69–78; sequence SSSAASVAAA. A phosphotyrosine mark is found at Tyr138 and Tyr154. A disordered region spans residues 184-238; the sequence is RVPTAASPSNTNSSSSSNTGSQSGTLSTSLSNTTNTNTTMGPNGTAQNQNQQGGE. The span at 190-238 shows a compositional bias: low complexity; it reads SPSNTNSSSSSNTGSQSGTLSTSLSNTTNTNTTMGPNGTAQNQNQQGGE. 2 RRM domains span residues 243 to 316 and 322 to 401; these read TNLY…MAKQ and TNLY…FADG. The disordered stretch occupies residues 569-595; sequence MTDSEQASTAASPDEAYTQYPHQAAPK.

Functionally, has a role in the perception of gravity. This chain is Protein alan shepard, found in Drosophila virilis (Fruit fly).